The sequence spans 2373 residues: Highly reducing polyketide synthase (2373 aa).

In terms of domain architecture, Ketosynthase family 3 (KS3) spans 19 to 446; that stretch reads QEPIAVVGIA…GSNAHVIVEE (428 aa). Residues Cys192, His329, and His369 each act as for beta-ketoacyl synthase activity in the active site. Residues 560–874 form a malonyl-CoA:ACP transacylase (MAT) domain region; sequence IFTGQGAQWP…QYTSAMARGA (315 aa). Residue Ser652 is the For malonyltransferase activity of the active site. The tract at residues 942–1078 is N-terminal hotdog fold; that stretch reads HDLLGSKVLG…GLIRIDEDVP (137 aa). Residues 942–1241 are dehydratase (DH) domain; it reads HDLLGSKVLG…LSGLRYTRID (300 aa). Positions 942-1246 constitute a PKS/mFAS DH domain; sequence HDLLGSKVLG…YTRIDTGPSV (305 aa). The active-site Proton acceptor; for dehydratase activity is the His974. The interval 1090-1246 is C-terminal hotdog fold; sequence SHQVDASLWH…YTRIDTGPSV (157 aa). The active-site Proton donor; for dehydratase activity is Asp1154. The interval 1669 to 1985 is enoyl reductase (ER) domain; that stretch reads GTTDSLIYSE…SANHIGKIVI (317 aa). The tract at residues 2010-2187 is ketoreductase (KR) domain; sequence GYLLIGGLKG…NSVDLGAIQD (178 aa). A Carrier domain is found at 2294 to 2370; that stretch reads AIHDAVIDVT…QLAQKIVARL (77 aa). O-(pantetheine 4'-phosphoryl)serine is present on Ser2330.

Requires pantetheine 4'-phosphate as cofactor.

Its pathway is mycotoxin biosynthesis. In terms of biological role, highly reducing polyketide synthase; part of the gene cluster that mediates the biosynthesis of brefeldin A (BFA), a protein transport inhibitor that shows antiviral, antifungal, and antitumor properties. The proposed biosynthesis of BFA involves formation of an acyclic polyketide chain that is differentially tailored throughout the backbone. The highly reducing polyketide synthase Bref-PKS is proposed to synthesize the precisely reduced octaketide precursor, which could then be directly offloaded by the thiohydrolase enzyme Bref-TH followed by a cytochrome P450 monooxygenase-mediated formation of the cyclopentane ring and macrocyclization to afford 7-deoxy BFA. Alternatively, the first ring annulation can also occur on the ACP-tethered intermediate before the thiohydrolase release and lactonization. The C7-hydroxylation by another cytochrome P450 monooxygenase is believed to be the final step in the process to obtain the final structure of BFA. In addition to the HRPKS Bref-PKS and the thiohydrolase Bref-TH, the brefeldin A biosynthesis cluster contains 4 cytochrome p450 monooxygenases (called orf3 to orf6), as well a the probable cluster-specific transcription regulator orf8. This Eupenicillium brefeldianum (Penicillium brefeldianum) protein is Highly reducing polyketide synthase.